We begin with the raw amino-acid sequence, 181 residues long: Shikimate kinase 2 (181 aa).

Residue 12-17 (GCGKTT) coordinates ATP. Positions 16 and 32 each coordinate Mg(2+). Residues Asp-34, Arg-58, and Gly-79 each contribute to the substrate site. The interval 112 to 126 (EAEPEADLRPTLTGK) is LID domain. Arg-120 contributes to the ATP binding site. Arg-139 serves as a coordination point for substrate.

The protein belongs to the shikimate kinase family. AroL subfamily. As to quaternary structure, monomer. It depends on Mg(2+) as a cofactor.

It localises to the cytoplasm. The enzyme catalyses shikimate + ATP = 3-phosphoshikimate + ADP + H(+). It participates in metabolic intermediate biosynthesis; chorismate biosynthesis; chorismate from D-erythrose 4-phosphate and phosphoenolpyruvate: step 5/7. Functionally, catalyzes the specific phosphorylation of the 3-hydroxyl group of shikimic acid using ATP as a cosubstrate. The sequence is that of Shikimate kinase 2 from Salmonella enteritidis PT4 (strain P125109).